Consider the following 158-residue polypeptide: Transcription elongation factor GreA (158 aa).

Residues 2-70 are a coiled coil; sequence ENQKQYPMTQ…IEQDIQRIEH (69 aa).

The protein belongs to the GreA/GreB family.

Necessary for efficient RNA polymerase transcription elongation past template-encoded arresting sites. The arresting sites in DNA have the property of trapping a certain fraction of elongating RNA polymerases that pass through, resulting in locked ternary complexes. Cleavage of the nascent transcript by cleavage factors such as GreA or GreB allows the resumption of elongation from the new 3'terminus. GreA releases sequences of 2 to 3 nucleotides. The protein is Transcription elongation factor GreA of Staphylococcus epidermidis (strain ATCC 35984 / DSM 28319 / BCRC 17069 / CCUG 31568 / BM 3577 / RP62A).